The sequence spans 83 residues: MSSGGLLLLLGLLTLWEGLTPVSSKDRPHFCHLPHDPGPCKGNFQAFYYHPVRRTCLEFIYGGCQGNPNNFKTIDECKRTCAA.

Positions 1 to 24 are cleaved as a signal peptide; sequence MSSGGLLLLLGLLTLWEGLTPVSS. In terms of domain architecture, BPTI/Kunitz inhibitor spans 31-81; it reads CHLPHDPGPCKGNFQAFYYHPVRRTCLEFIYGGCQGNPNNFKTIDECKRTC. 3 disulfide bridges follow: C31–C81, C40–C64, and C56–C77.

It belongs to the venom Kunitz-type family. Expressed by the venom gland.

Its subcellular location is the secreted. Functionally, serine protease inhibitor that acts against trypsin (EC(50)=10 nM, Ki=5nM), chymotrypsin (EC(50)=100 nM, Ki=40 nM), and plasmin (EC(50)=100 nM, Ki=40 nM). This is Kunitz serine protease inhibitor Pr-mulgin 2 from Pseudechis rossignolii (Papuan pigmy mulga snake).